The following is a 221-amino-acid chain: Tumor protein p53-inducible nuclear protein 2 (221 aa).

An LIR motif is present at residues 26–41 (VSEEDEVDGWLIIDLQ). The segment at 41–68 (QDSYTAPPDPGASPAPAGRPPPAPSLMD) is disordered. The segment covering 47-64 (PPDPGASPAPAGRPPPAP) has biased composition (pro residues). Residue Ser136 is modified to Phosphoserine. The disordered stretch occupies residues 177–210 (RQRAERHTLSAKVLQRQNRARESRSRRPKHQGSF).

In terms of assembly, interacts with VMP1, GABARAP, GABARAPL1, GABARAPL2, MAP1LC3A, MAP1LC3B, MAP1LC3C and THRA.

It localises to the cytoplasm. The protein resides in the cytosol. It is found in the nucleus. The protein localises to the PML body. Its subcellular location is the cytoplasmic vesicle. It localises to the autophagosome. Functionally, dual regulator of transcription and autophagy. Positively regulates autophagy and is required for autophagosome formation and processing. May act as a scaffold protein that recruits MAP1LC3A, GABARAP and GABARAPL2 and brings them to the autophagosome membrane by interacting with VMP1 where, in cooperation with the BECN1-PI3-kinase class III complex, they trigger autophagosome development. Acts as a transcriptional activator of THRA. The sequence is that of Tumor protein p53-inducible nuclear protein 2 (Tp53inp2) from Mus musculus (Mouse).